Reading from the N-terminus, the 87-residue chain is Protein WFDC11 (87 aa).

The first 25 residues, 1-25 (MVSLMKLWIPMLMTFFCTVLLSVLG), serve as a signal peptide directing secretion.

The protein localises to the secreted. This Homo sapiens (Human) protein is Protein WFDC11 (WFDC11).